We begin with the raw amino-acid sequence, 1270 residues long: DNA-directed RNA polymerase subunit beta (1270 aa).

The protein belongs to the RNA polymerase beta chain family. As to quaternary structure, the RNAP catalytic core consists of 2 alpha, 1 beta, 1 beta' and 1 omega subunit. When a sigma factor is associated with the core the holoenzyme is formed, which can initiate transcription.

The enzyme catalyses RNA(n) + a ribonucleoside 5'-triphosphate = RNA(n+1) + diphosphate. DNA-dependent RNA polymerase catalyzes the transcription of DNA into RNA using the four ribonucleoside triphosphates as substrates. In Bacteroides fragilis (strain ATCC 25285 / DSM 2151 / CCUG 4856 / JCM 11019 / LMG 10263 / NCTC 9343 / Onslow / VPI 2553 / EN-2), this protein is DNA-directed RNA polymerase subunit beta.